A 460-amino-acid chain; its full sequence is V-type ATP synthase beta chain (460 aa).

The protein belongs to the ATPase alpha/beta chains family.

Its function is as follows. Produces ATP from ADP in the presence of a proton gradient across the membrane. The V-type beta chain is a regulatory subunit. The sequence is that of V-type ATP synthase beta chain from Clostridium novyi (strain NT).